We begin with the raw amino-acid sequence, 505 residues long: Deoxyguanosinetriphosphate triphosphohydrolase (505 aa).

One can recognise an HD domain in the interval 66–273; sequence RLTHSMEVQQ…MEAADDISYC (208 aa).

This sequence belongs to the dGTPase family. Type 1 subfamily. In terms of assembly, homotetramer. It depends on Mg(2+) as a cofactor.

It carries out the reaction dGTP + H2O = 2'-deoxyguanosine + triphosphate + H(+). Functionally, dGTPase preferentially hydrolyzes dGTP over the other canonical NTPs. The polypeptide is Deoxyguanosinetriphosphate triphosphohydrolase (Escherichia coli O139:H28 (strain E24377A / ETEC)).